The primary structure comprises 822 residues: Putative ESX-1 scaffolding and assembly protein SaeB (822 aa).

Functionally, may be involved in assembly of the ESX-1 / type VII specialized secretion system (T7SS), which exports several proteins including EsxA and EsxB. Involved in DNA conjugation in recipient (MKD8) but not donor (mc(2)155) strain. This chain is Putative ESX-1 scaffolding and assembly protein SaeB (saeB), found in Mycolicibacterium smegmatis (strain MKD8) (Mycobacterium smegmatis).